Consider the following 1058-residue polypeptide: Gem-associated protein 4 (1058 aa).

An N-acetylmethionine modification is found at M1. Residue T84 is modified to Phosphothreonine. 2 positions are modified to phosphoserine: S86 and S205. A leucine-zipper region spans residues 714–735 (LPKEKRCLSLDRKDLAIHILEL).

In terms of assembly, part of the core SMN complex that contains SMN1, GEMIN2/SIP1, DDX20/GEMIN3, GEMIN4, GEMIN5, GEMIN6, GEMIN7, GEMIN8 and STRAP/UNRIP. Part of the SMN-Sm complex that contains SMN1, GEMIN2/SIP1, DDX20/GEMIN3, GEMIN4, GEMIN5, GEMIN6, GEMIN7, GEMIN8, STRAP/UNRIP and the Sm proteins SNRPB, SNRPD1, SNRPD2, SNRPD3, SNRPE, SNRPF and SNRPG. Interacts with GEMIN3; the interaction is direct. Interacts with GEMIN5. Interacts with GEMIN8; the interaction is direct. Interacts with several snRNP SM core proteins, including SNRPB, SNRPD1, SNRPD2, SNRPD3 and SNRPE. Interacts with PPP4R2.

The protein localises to the cytoplasm. The protein resides in the nucleus. Its subcellular location is the nucleolus. It is found in the gem. Its function is as follows. The SMN complex catalyzes the assembly of small nuclear ribonucleoproteins (snRNPs), the building blocks of the spliceosome, and thereby plays an important role in the splicing of cellular pre-mRNAs. Most spliceosomal snRNPs contain a common set of Sm proteins SNRPB, SNRPD1, SNRPD2, SNRPD3, SNRPE, SNRPF and SNRPG that assemble in a heptameric protein ring on the Sm site of the small nuclear RNA to form the core snRNP (Sm core). In the cytosol, the Sm proteins SNRPD1, SNRPD2, SNRPE, SNRPF and SNRPG are trapped in an inactive 6S pICln-Sm complex by the chaperone CLNS1A that controls the assembly of the core snRNP. To assemble core snRNPs, the SMN complex accepts the trapped 5Sm proteins from CLNS1A forming an intermediate. Binding of snRNA inside 5Sm triggers eviction of the SMN complex, thereby allowing binding of SNRPD3 and SNRPB to complete assembly of the core snRNP. The sequence is that of Gem-associated protein 4 (GEMIN4) from Homo sapiens (Human).